Here is a 725-residue protein sequence, read N- to C-terminus: mRNA decay activator protein ZFP36L3 (725 aa).

Residues methionine 1 to glycine 25 are compositionally biased toward low complexity. Residues methionine 1–threonine 119 are disordered. Composition is skewed to polar residues over residues alanine 42–alanine 72 and histidine 100–threonine 119. C3H1-type zinc fingers lie at residues arginine 122 to arginine 150 and lysine 160 to proline 188. The interval valine 193–serine 711 is necessary for cytoplasmic localization. The disordered stretch occupies residues serine 276–glycine 310. Residues histidine 280–proline 294 are compositionally biased toward basic and acidic residues. 4 helical membrane-spanning segments follow: residues leucine 380–leucine 400, alanine 420–methionine 440, alanine 441–glycine 461, and alanine 468–valine 488. The tract at residues aspartate 686–asparagine 709 is disordered. Low complexity predominate over residues arginine 693 to glutamate 702.

Expressed in placenta and extraembryonic tissues (at protein level). Not detected in embryos and fetus.

Its subcellular location is the cytoplasm. It localises to the membrane. Placenta-specific zinc-finger RNA-binding protein that destabilizes cytoplasmic AU-rich element (ARE)-containing mRNA transcripts by promoting their poly(A) tail removal or deadenylation, and hence provide a mechanism for attenuating protein synthesis. Binds to the 3'-UTR ARE of placental target mRNAs, such as TNF, HBEGF and LIPG. Involved in placental expression of many genes important for normal placental physiology. The chain is mRNA decay activator protein ZFP36L3 from Mus musculus (Mouse).